Consider the following 165-residue polypeptide: Protein SprT (165 aa).

The SprT-like domain maps to 10–158; sequence EACYRQAEHF…CRRCKATLVF (149 aa). Residue H69 participates in Zn(2+) binding. The active site involves E70. Position 73 (H73) interacts with Zn(2+).

It belongs to the SprT family. The cofactor is Zn(2+).

Its subcellular location is the cytoplasm. The sequence is that of Protein SprT from Pseudomonas aeruginosa (strain UCBPP-PA14).